We begin with the raw amino-acid sequence, 312 residues long: Olfactory receptor 6C68 (312 aa).

Topologically, residues 1–23 are extracellular; it reads MRKHTAITTFILLGLTEDPQLQV. The chain crosses the membrane as a helical span at residues 24–44; it reads LLFMFLFITYMLSVTGKLTII. The Cytoplasmic segment spans residues 45-55; sequence ALTMLDPHLKT. Residues 56 to 76 form a helical membrane-spanning segment; the sequence is PMYFFLQNLSFLEISFTATCV. Residues 77-95 are Extracellular-facing; sequence PRFLYSISTGNKIITYNAC. The cysteines at positions 95 and 177 are disulfide-linked. Residues 96–116 traverse the membrane as a helical segment; that stretch reads VIQLFFADLFGVTEFFLLATM. The Cytoplasmic segment spans residues 117–143; that stretch reads SYDRYVAICKPLHYMAIMSNKVCKTMV. Residues 144–164 traverse the membrane as a helical segment; sequence ICCWMAALMIILPPLSLGFHL. The Extracellular segment spans residues 165-197; it reads EFCDSNVINHFGCDALPILKIPCSDTSLIEQMV. The helical transmembrane segment at 198 to 218 threads the bilayer; the sequence is VASAVLTFIITLVCVVLSYTY. At 219–239 the chain is on the cytoplasmic side; sequence IIRTILKFPSVQQKKKAFSTC. A helical membrane pass occupies residues 240 to 260; it reads SSHITVVSITYGSCIFIYIKP. Residues 261 to 271 lie on the Extracellular side of the membrane; it reads SAKEEVNINKG. A helical transmembrane segment spans residues 272–292; the sequence is VSVLISSISPMLNSFIYTLRN. Over 293-312 the chain is Cytoplasmic; sequence EQVKQAFHDSLKKIAFRLKK.

This sequence belongs to the G-protein coupled receptor 1 family.

It localises to the cell membrane. Its function is as follows. Odorant receptor. In Homo sapiens (Human), this protein is Olfactory receptor 6C68 (OR6C68).